A 277-amino-acid polypeptide reads, in one-letter code: NADPH-dependent 7-cyano-7-deazaguanine reductase (277 aa).

Isoleucine 83–serine 85 is a binding site for substrate. Serine 85–lysine 86 provides a ligand contact to NADPH. Residue cysteine 184 is the Thioimide intermediate of the active site. Catalysis depends on aspartate 191, which acts as the Proton donor. Residue histidine 223–glutamate 224 coordinates substrate. Arginine 252–glycine 253 contributes to the NADPH binding site.

Belongs to the GTP cyclohydrolase I family. QueF type 2 subfamily. In terms of assembly, homodimer.

The protein resides in the cytoplasm. The catalysed reaction is 7-aminomethyl-7-carbaguanine + 2 NADP(+) = 7-cyano-7-deazaguanine + 2 NADPH + 3 H(+). It functions in the pathway tRNA modification; tRNA-queuosine biosynthesis. Its function is as follows. Catalyzes the NADPH-dependent reduction of 7-cyano-7-deazaguanine (preQ0) to 7-aminomethyl-7-deazaguanine (preQ1). The protein is NADPH-dependent 7-cyano-7-deazaguanine reductase of Cupriavidus pinatubonensis (strain JMP 134 / LMG 1197) (Cupriavidus necator (strain JMP 134)).